A 280-amino-acid chain; its full sequence is 30 kDa immediate-early protein 2 (280 aa).

Residues 36–164 are disordered; it reads SEEEQGEEVE…KKSKRISELD (129 aa). Low complexity-rich tracts occupy residues 47-67, 90-101, and 132-147; these read RGATASSPSTGSGTPRVTSPT, SSSSSSCSSASD, and AASSSLLSCGHQSSGG.

In terms of biological role, activates the E1.7 promoter. This activation is augmented by the IE1 protein. It down-regulates the transcription of genes under the control of the major IE promoter. In Human cytomegalovirus (strain Towne) (HHV-5), this protein is 30 kDa immediate-early protein 2 (UL122).